The primary structure comprises 207 residues: MRHRILTLLLGLAVLVTAGCGFNLRGTTQVPTELQKLLLESSDPYGPLARSIRQQLRLNNVTIVDDAMRKDIPTLRIIGSSESQETVSIFRNGVAAENQLVLHVQAQVLIPGHDIYPLQVNVFRTFFDNPLTALAKEAEAEVLRQEMREQAAQQLVRQLLTVHAAEVKNTQKNGDKPVSDANAAQGSTPTAVNETTLGEPAVSTSAK.

The N-terminal stretch at 1–19 (MRHRILTLLLGLAVLVTAG) is a signal peptide. Residue Cys20 is the site of N-palmitoyl cysteine attachment. A lipid anchor (S-diacylglycerol cysteine) is attached at Cys20. The interval 168–207 (KNTQKNGDKPVSDANAAQGSTPTAVNETTLGEPAVSTSAK) is disordered. Positions 182 to 207 (NAAQGSTPTAVNETTLGEPAVSTSAK) are enriched in polar residues.

It belongs to the LptE lipoprotein family. In terms of assembly, component of the lipopolysaccharide transport and assembly complex. Interacts with LptD.

It is found in the cell outer membrane. Its function is as follows. Together with LptD, is involved in the assembly of lipopolysaccharide (LPS) at the surface of the outer membrane. Required for the proper assembly of LptD. Binds LPS and may serve as the LPS recognition site at the outer membrane. The sequence is that of LPS-assembly lipoprotein LptE from Yersinia pseudotuberculosis serotype O:1b (strain IP 31758).